The sequence spans 278 residues: MLKNLVVLTGLSGAGKSTALGLLEDMGFYCIDNLPVKIIDQILPIISINIESLALVIDSRSGDIDDIVSVIENMKAKYPVKVIFLNAKDEVLINRFAHTRRNHPLLKEETSLEKAILEERKLFIKILELSDIVVDTSNLNPHQLRERLVGILTSVKKKFRLRILSFGFKYGVPLDVDFIFDVRFFPNPFYVVGLRQKSGKDKEVKNFLYNTQGVKEFLDLIKKVVDFAIQRYENEGRTELSVGIGCTGGQHRSVFFAEELFKFYNENCKVILEHRDVK.

ATP is bound at residue 10 to 17; it reads GLSGAGKS. A GTP-binding site is contributed by 58-61; that stretch reads DSRS.

The protein belongs to the RapZ-like family.

Displays ATPase and GTPase activities. The chain is Nucleotide-binding protein Tmel_1373 from Thermosipho melanesiensis (strain DSM 12029 / CIP 104789 / BI429).